A 254-amino-acid polypeptide reads, in one-letter code: 4-hydroxy-tetrahydrodipicolinate reductase (254 aa).

NAD(+)-binding positions include 8–13, aspartate 35, 86–88, and 110–113; these read GCSGKM, CST, and SANM. The active-site Proton donor/acceptor is the histidine 143. Histidine 144 lines the (S)-2,3,4,5-tetrahydrodipicolinate pocket. The active-site Proton donor is lysine 147. 153–154 lines the (S)-2,3,4,5-tetrahydrodipicolinate pocket; sequence GT.

This sequence belongs to the DapB family.

Its subcellular location is the cytoplasm. The enzyme catalyses (S)-2,3,4,5-tetrahydrodipicolinate + NAD(+) + H2O = (2S,4S)-4-hydroxy-2,3,4,5-tetrahydrodipicolinate + NADH + H(+). It carries out the reaction (S)-2,3,4,5-tetrahydrodipicolinate + NADP(+) + H2O = (2S,4S)-4-hydroxy-2,3,4,5-tetrahydrodipicolinate + NADPH + H(+). The protein operates within amino-acid biosynthesis; L-lysine biosynthesis via DAP pathway; (S)-tetrahydrodipicolinate from L-aspartate: step 4/4. In terms of biological role, catalyzes the conversion of 4-hydroxy-tetrahydrodipicolinate (HTPA) to tetrahydrodipicolinate. The sequence is that of 4-hydroxy-tetrahydrodipicolinate reductase from Clostridium perfringens (strain ATCC 13124 / DSM 756 / JCM 1290 / NCIMB 6125 / NCTC 8237 / Type A).